The chain runs to 222 residues: MHYREKSLGELAIAIPRATALFREFNLDFCCGGKQTLQHAAGKRQLDIAMLEARLAELDAEPPSEKNWRAAPLNDMIPYIVQRFHDRHREQLPELIIMAEKVERVHQDKSACPHGLAAQLTLILDDLSQHMMKEERILFPMIQAGMGRQAAGPISVMEHEHDDAGQQLEVVKTLTDNLTPPADACNTWRALYAGIGEFITDLMEHIHLENNLLFPRALRGEA.

It belongs to the RIC family. YtfE subfamily. As to quaternary structure, homodimer.

It is found in the cytoplasm. In terms of biological role, di-iron-containing protein involved in the repair of iron-sulfur clusters damaged by oxidative and nitrosative stress conditions. In Musicola paradisiaca (strain Ech703) (Dickeya paradisiaca), this protein is Iron-sulfur cluster repair protein YtfE.